We begin with the raw amino-acid sequence, 161 residues long: GTP-dependent dephospho-CoA kinase (161 aa).

The GTP site is built by D37, I38, D56, K58, E112, and D135.

This sequence belongs to the GTP-dependent DPCK family.

The enzyme catalyses 3'-dephospho-CoA + GTP = GDP + CoA + H(+). The protein operates within cofactor biosynthesis; coenzyme A biosynthesis. In terms of biological role, catalyzes the GTP-dependent phosphorylation of the 3'-hydroxyl group of dephosphocoenzyme A to form coenzyme A (CoA). This is GTP-dependent dephospho-CoA kinase from Methanococcus aeolicus (strain ATCC BAA-1280 / DSM 17508 / OCM 812 / Nankai-3).